Here is a 202-residue protein sequence, read N- to C-terminus: Ion-translocating oxidoreductase complex subunit G (202 aa).

The helical transmembrane segment at 11 to 31 threads the bilayer; it reads AILLALIALICTALSTGIYLL. Threonine 177 is modified (FMN phosphoryl threonine).

This sequence belongs to the RnfG family. In terms of assembly, the complex is composed of six subunits: RnfA, RnfB, RnfC, RnfD, RnfE and RnfG. It depends on FMN as a cofactor.

It is found in the cell inner membrane. In terms of biological role, part of a membrane-bound complex that couples electron transfer with translocation of ions across the membrane. The protein is Ion-translocating oxidoreductase complex subunit G of Pasteurella multocida (strain Pm70).